Reading from the N-terminus, the 292-residue chain is Probable endonuclease lcl3 (292 aa).

The interval 1-27 (MRWPPWSSESTNDEQKQTPSSWLSSAA) is disordered. Residues 17–27 (QTPSSWLSSAA) are compositionally biased toward polar residues. A helical membrane pass occupies residues 45–61 (IIPTVVLTSGILIAVRF). The region spanning 83–250 (RSIFGQVTSV…KKRARGLWKD (168 aa)) is the TNase-like domain. Arg-134 is a catalytic residue. Asp-139 serves as a coordination point for Ca(2+). Residues Glu-142 and Arg-182 contribute to the active site. Residues 257–292 (GWESPREYKNRMGMGDPLPIEKGNGKGNGKGKIGQK) are disordered. The segment covering 281-292 (GKGNGKGKIGQK) has biased composition (gly residues).

It belongs to the LCL3 family.

The protein localises to the mitochondrion. It localises to the membrane. In Penicillium rubens (strain ATCC 28089 / DSM 1075 / NRRL 1951 / Wisconsin 54-1255) (Penicillium chrysogenum), this protein is Probable endonuclease lcl3 (lcl3).